A 277-amino-acid chain; its full sequence is General transcription factor IIF subunit 2 (277 aa).

The protein belongs to the TFIIF beta subunit family. Heterodimer of an alpha and a beta subunit.

Its subcellular location is the nucleus. In terms of biological role, TFIIF is a general transcription initiation factor that binds to RNA polymerase II and helps to recruit it to the initiation complex in collaboration with TFIIB. The polypeptide is General transcription factor IIF subunit 2 (TfIIFbeta) (Drosophila melanogaster (Fruit fly)).